The sequence spans 220 residues: Histone H1B (220 aa).

2 disordered regions span residues 1–45 (MTAT…PSAS) and 99–220 (QVKG…APKK). Low complexity predominate over residues 28–45 (KKVAGGAKAKKPSGPSAS). The 74-residue stretch at 40-113 (SGPSASELIV…GASGSFKLNK (74 aa)) folds into the H15 domain. Basic residues-rich tracts occupy residues 122–134 (AAKKKPAAPKAKK), 141–151 (KAPKSPKKPKK), 158–196 (SPKKVKKLAKAAKSPKKPKAVKAKKVAKSPAKKATKPKT), and 204–220 (KVAKPKAAKAKKPAPKK).

This sequence belongs to the histone H1/H5 family.

Its subcellular location is the nucleus. It is found in the chromosome. Its function is as follows. Histones H1 are necessary for the condensation of nucleosome chains into higher-order structures. The sequence is that of Histone H1B from Xenopus laevis (African clawed frog).